Reading from the N-terminus, the 203-residue chain is uncharacterized protein (203 aa).

This is an uncharacterized protein from Caldicellulosiruptor sp. (strain Rt8B.4).